The sequence spans 626 residues: Glycosyltransferase 25 family member (626 aa).

Positions 1-21 (MLKKQVFYGILLICAFVCIYG) are cleaved as a signal peptide. Residues N113, N234, N272, and N533 are each glycosylated (N-linked (GlcNAc...) asparagine). The Prevents secretion from ER signature appears at 623–626 (HQEL).

It belongs to the glycosyltransferase 25 family.

The protein localises to the endoplasmic reticulum lumen. The chain is Glycosyltransferase 25 family member from Drosophila pseudoobscura pseudoobscura (Fruit fly).